Consider the following 1092-residue polypeptide: Extended synaptotagmin-1 (1092 aa).

M1 is modified (N-acetylmethionine). Residues 1–28 (MEHSPEEGASPEPSGQPPATDSTRDGGS) lie on the Cytoplasmic side of the membrane. A disordered region spans residues 1–36 (MEHSPEEGASPEPSGQPPATDSTRDGGSGVPPAGPG). Residues 29 to 49 (GVPPAGPGAASEALAVLTSFG) form a helical membrane-spanning segment. Topologically, residues 50-52 (RRL) are lumenal. A helical transmembrane segment spans residues 53-73 (LVLVPVYLAGAAGLSVGFVLF). Topologically, residues 74 to 1092 (GLALYLGWRR…LMDDRDKGGS (1019 aa)) are cytoplasmic. Positions 125–303 (DVEKAEWLNK…LPNRLLVPLV (179 aa)) constitute an SMP-LTD domain. 4 C2 domains span residues 302 to 423 (LVPD…DNWY), 444 to 570 (DAEK…QLSS), 616 to 738 (DAPP…DEWL), and 769 to 886 (QVNS…ALSG). S314 carries the phosphoserine; by CDK5 modification. The Ca(2+) site is built by K334, D335, D347, D394, D396, D398, D400, and D401. Residues 604 to 628 (WDRESLETGSSVDAPPRPYHTTPNS) are disordered. The residue at position 804 (K804) is an N6-acetyllysine. S807 carries the post-translational modification Phosphoserine. A disordered region spans residues 909 to 937 (HSHSYSHSHSSSSLNDEPEALGGPTHPAS). Over residues 911-921 (HSYSHSHSSSS) the composition is skewed to low complexity. S937 and S951 each carry phosphoserine. The C2 5 domain maps to 959 to 1081 (PLGQVKLTVW…DLSQGAAQWY (123 aa)). Y997 is modified (phosphotyrosine). A required for phosphatidylinositol 4,5-bisphosphate-dependent location at the cell membrane region spans residues 1006 to 1013 (KNRSTKRK).

Belongs to the extended synaptotagmin family. As to quaternary structure, interacts with ESYT2 and ESYT3. Interacts with ADGRD1; inhibiting the G-protein-coupled receptor activity of ADGRD1. Interaction with ADGRD1 is abolished when cytosolic calcium increases, relieving ADGRD1 G-protein-coupled receptor activity. Interacts (phosphorylated form) with SLC2A4. Phosphorylated on Ser residues in insulin-treated adipocytes (in vitro); this promotes interaction with SLC2A4.

It is found in the endoplasmic reticulum membrane. The protein resides in the cell membrane. Binds calcium (via the C2 domains) and translocates to sites of contact between the endoplasmic reticulum and the cell membrane in response to increased cytosolic calcium levels. Helps tether the endoplasmic reticulum to the cell membrane and promotes the formation of appositions between the endoplasmic reticulum and the cell membrane. Acts as an inhibitor of ADGRD1 G-protein-coupled receptor activity in absence of cytosolic calcium. Binds glycerophospholipids in a barrel-like domain and may play a role in cellular lipid transport. This is Extended synaptotagmin-1 (Esyt1) from Mus musculus (Mouse).